Reading from the N-terminus, the 226-residue chain is MEKKLCIAIDGPAAAGKSTVAKIVARKKSYIYIDTGAMYRAITYLALEKGVDLNDEAALTALLKESAIDLTVSPEGEQKVYIAGEDVTEAIRTDSVSNQVSIVAKYAGIREEMTKRQQQLAEKGGVVMDGRDIGTHVLPNAEVKIFLLASVEERAKRRFEENVKKGYNVNYETLAEEIRRRDKLDSEREISPLKKADDALEIDTTSLTIDEVAEKILQIVDKKAQK.

11–19 (GPAAAGKST) is a binding site for ATP.

Belongs to the cytidylate kinase family. Type 1 subfamily.

The protein resides in the cytoplasm. The catalysed reaction is CMP + ATP = CDP + ADP. It carries out the reaction dCMP + ATP = dCDP + ADP. This chain is Cytidylate kinase, found in Bacillus licheniformis (strain ATCC 14580 / DSM 13 / JCM 2505 / CCUG 7422 / NBRC 12200 / NCIMB 9375 / NCTC 10341 / NRRL NRS-1264 / Gibson 46).